The following is a 432-amino-acid chain: Adenylosuccinate synthetase (432 aa).

GTP is bound by residues 13–19 (GDEGKGK) and 41–43 (GHT). Residue Asp14 is the Proton acceptor of the active site. Residues Asp14 and Gly41 each contribute to the Mg(2+) site. Residues 14-17 (DEGK), 39-42 (NAGH), Thr130, Arg144, Gln225, Thr240, and Arg304 contribute to the IMP site. His42 serves as the catalytic Proton donor. Position 300 to 306 (300 to 306 (ATTGRRR)) interacts with substrate. GTP-binding positions include Arg306, 332 to 334 (KLD), and 415 to 417 (STG).

The protein belongs to the adenylosuccinate synthetase family. Homodimer. It depends on Mg(2+) as a cofactor.

The protein localises to the cytoplasm. The enzyme catalyses IMP + L-aspartate + GTP = N(6)-(1,2-dicarboxyethyl)-AMP + GDP + phosphate + 2 H(+). The protein operates within purine metabolism; AMP biosynthesis via de novo pathway; AMP from IMP: step 1/2. Functionally, plays an important role in the de novo pathway of purine nucleotide biosynthesis. Catalyzes the first committed step in the biosynthesis of AMP from IMP. This chain is Adenylosuccinate synthetase, found in Shigella sonnei (strain Ss046).